A 295-amino-acid chain; its full sequence is 2-dehydropantoate 2-reductase (295 aa).

Residues 9-14 (GPGAVG), N100, and A126 contribute to the NADP(+) site. Substrate is bound at residue N100. Catalysis depends on K177, which acts as the Proton donor. Substrate contacts are provided by N181 and S246. E258 is an NADP(+) binding site.

The protein belongs to the ketopantoate reductase family.

Its subcellular location is the cytoplasm. The enzyme catalyses (R)-pantoate + NADP(+) = 2-dehydropantoate + NADPH + H(+). It participates in cofactor biosynthesis; (R)-pantothenate biosynthesis; (R)-pantoate from 3-methyl-2-oxobutanoate: step 2/2. Functionally, catalyzes the NADPH-dependent reduction of ketopantoate into pantoic acid. This chain is 2-dehydropantoate 2-reductase, found in Mycobacterium tuberculosis (strain CDC 1551 / Oshkosh).